The primary structure comprises 93 residues: MMNLLNKSLEENGSVLTAFYIFVAFVALYLLGRALQAFVQAADACCLFWYTWVVVPGAKGTTFVYKHTYGKKLNKPELETVIVNEFPKNGWKQ.

Topologically, residues 1 to 11 are virion surface; sequence MMNLLNKSLEE. The chain crosses the membrane as a helical span at residues 12 to 32; that stretch reads NGSVLTAFYIFVAFVALYLLG. At 33–93 the chain is on the intravirion side; that stretch reads RALQAFVQAA…NEFPKNGWKQ (61 aa).

This sequence belongs to the gammacoronaviruses E protein family. As to quaternary structure, homooligomer. Interacts with the M membrane protein in the budding compartment of the host cell, which is located between endoplasmic reticulum and the Golgi complex. The cytoplasmic tails of both proteins are important for this function. Interacts with Nucleoprotein.

The protein resides in the host Golgi apparatus membrane. Its function is as follows. Plays a central role in virus morphogenesis and assembly. Acts as a viroporin and self-assembles in host membranes forming pentameric protein-lipid pores that allow ion transport. Also plays a role in the induction of apoptosis. In Avian infectious bronchitis virus (strain Portugal/322/82) (IBV), this protein is Envelope small membrane protein.